The chain runs to 390 residues: Phosphopentomutase (390 aa).

Mn(2+)-binding residues include aspartate 11, aspartate 283, histidine 288, aspartate 324, histidine 325, and histidine 336.

It belongs to the phosphopentomutase family. The cofactor is Mn(2+).

The protein localises to the cytoplasm. It catalyses the reaction 2-deoxy-alpha-D-ribose 1-phosphate = 2-deoxy-D-ribose 5-phosphate. The catalysed reaction is alpha-D-ribose 1-phosphate = D-ribose 5-phosphate. It participates in carbohydrate degradation; 2-deoxy-D-ribose 1-phosphate degradation; D-glyceraldehyde 3-phosphate and acetaldehyde from 2-deoxy-alpha-D-ribose 1-phosphate: step 1/2. Isomerase that catalyzes the conversion of deoxy-ribose 1-phosphate (dRib-1-P) and ribose 1-phosphate (Rib-1-P) to deoxy-ribose 5-phosphate (dRib-5-P) and ribose 5-phosphate (Rib-5-P), respectively. The protein is Phosphopentomutase of Alkaliphilus metalliredigens (strain QYMF).